Reading from the N-terminus, the 235-residue chain is Probable RNA 2'-phosphotransferase (235 aa).

This sequence belongs to the KptA/TPT1 family.

In terms of biological role, removes the 2'-phosphate from RNA via an intermediate in which the phosphate is ADP-ribosylated by NAD followed by a presumed transesterification to release the RNA and generate ADP-ribose 1''-2''-cyclic phosphate (APPR&gt;P). May function as an ADP-ribosylase. This Thermoplasma volcanium (strain ATCC 51530 / DSM 4299 / JCM 9571 / NBRC 15438 / GSS1) protein is Probable RNA 2'-phosphotransferase.